Consider the following 142-residue polypeptide: MPFGEYPYTIDDKGRVVMPPAFREFVEDGLILTRGMEGCLYAFPLPGWKRVEEQLEGLPLTDAGSRAFVRFFYSGASKARLDNQSRVSIPQTLRAFAGLDSDVIVAGAPGRLEFWNPQRWEAAIAAVQAEPPQPDLLANFVA.

SpoVT-AbrB domains lie at 5–47 (EYPY…PLPG) and 76–119 (ASKA…NPQR).

Belongs to the MraZ family. Forms oligomers.

It localises to the cytoplasm. The protein localises to the nucleoid. This chain is Transcriptional regulator MraZ, found in Deinococcus radiodurans (strain ATCC 13939 / DSM 20539 / JCM 16871 / CCUG 27074 / LMG 4051 / NBRC 15346 / NCIMB 9279 / VKM B-1422 / R1).